The chain runs to 182 residues: Crossover junction endodeoxyribonuclease RuvC (182 aa).

Catalysis depends on residues D7, E69, and D141. Residues D7, E69, and D141 each coordinate Mg(2+).

It belongs to the RuvC family. In terms of assembly, homodimer which binds Holliday junction (HJ) DNA. The HJ becomes 2-fold symmetrical on binding to RuvC with unstacked arms; it has a different conformation from HJ DNA in complex with RuvA. In the full resolvosome a probable DNA-RuvA(4)-RuvB(12)-RuvC(2) complex forms which resolves the HJ. Requires Mg(2+) as cofactor.

The protein localises to the cytoplasm. The catalysed reaction is Endonucleolytic cleavage at a junction such as a reciprocal single-stranded crossover between two homologous DNA duplexes (Holliday junction).. Its function is as follows. The RuvA-RuvB-RuvC complex processes Holliday junction (HJ) DNA during genetic recombination and DNA repair. Endonuclease that resolves HJ intermediates. Cleaves cruciform DNA by making single-stranded nicks across the HJ at symmetrical positions within the homologous arms, yielding a 5'-phosphate and a 3'-hydroxyl group; requires a central core of homology in the junction. The consensus cleavage sequence is 5'-(A/T)TT(C/G)-3'. Cleavage occurs on the 3'-side of the TT dinucleotide at the point of strand exchange. HJ branch migration catalyzed by RuvA-RuvB allows RuvC to scan DNA until it finds its consensus sequence, where it cleaves and resolves the cruciform DNA. In Polaromonas naphthalenivorans (strain CJ2), this protein is Crossover junction endodeoxyribonuclease RuvC.